We begin with the raw amino-acid sequence, 141 residues long: Large ribosomal subunit protein uL11 (141 aa).

Belongs to the universal ribosomal protein uL11 family. As to quaternary structure, part of the ribosomal stalk of the 50S ribosomal subunit. Interacts with L10 and the large rRNA to form the base of the stalk. L10 forms an elongated spine to which L12 dimers bind in a sequential fashion forming a multimeric L10(L12)X complex. In terms of processing, one or more lysine residues are methylated.

In terms of biological role, forms part of the ribosomal stalk which helps the ribosome interact with GTP-bound translation factors. This Synechococcus sp. (strain ATCC 27144 / PCC 6301 / SAUG 1402/1) (Anacystis nidulans) protein is Large ribosomal subunit protein uL11.